A 673-amino-acid polypeptide reads, in one-letter code: MASPAPPAAEELPGPAARRLYSRMEASCLELALEGERLCKAGDFKAGVAFFEAAVQVGTEDLKTLSAIYSQLGNAYFYLKEYARALQFHKHDLLLARTIGDRMGEAKASGNLGNTLKVLGRFDEAIVCCQRHLDIAQEQGDKVGEARALYNIGNVYHAKGKQLSWNAAQDPGHLPPDVRETLHRASEFYERNLSLVKELGDRAAQGRAYGNLGNTHYLLGNFTEATTFHKERLAIAKEFGDKAAERRAYSNLGNAHIFLGRFDVAAEHYKKTLQLSRQIRDQAVEAQACYSLGNTYTLLQDYERAAEYHLRHLVIAQELADRVGEGRACWSLGNAYVSMGSPAQALTFAKKHLQISQEIGDRNGELTARMNIAHLQLALGRLTSPAAAEKPDLAGYEAQGARPKRTQRLSAETWDLLRLPLDREQNGETHHTGDWRGPSRDSLPLPMRSRKYQEGPDAIERRPREGSHSPLDSADVRVQVPRTGIPRAPSSDEECFFDLLSKFQSSRMDDQRCPLEEGQAGAAEATAAPTLEERAAQPSVTASPQTEEFFDLIASSQSRRLDDQRASVGSLPGLRITLNNVGHLRGDGDPQEPGDEFFNMLIKYQSSRIDDQRCPPPDVLPRGPTMPDEDFFSLIQRVQAKRMDEQRVDLAGSPDQEASGLPDPRQQCPPGAS.

Residues 1–507 (MASPAPPAAE…DLLSKFQSSR (507 aa)) form a mediates association with membranes region. TPR repeat units follow at residues 28–61 (CLEL…GTED), 66–99 (SAIY…ARTI), 106–139 (AKAS…AQEQ), 146–178 (ARAL…PPDV), 180–199 (ETLH…VKEL), 206–239 (GRAY…AKEF), 246–279 (RRAY…SRQI), 286–319 (AQAC…AQEL), and 326–359 (GRAC…SQEI). The interaction with STK11/LKB1 stretch occupies residues 361-485 (DRNGELTARM…VRVQVPRTGI (125 aa)). Serine 410 is subject to Phosphoserine. Arginine 418 bears the Omega-N-methylarginine mark. Residues 420-439 (PLDREQNGETHHTGDWRGPS) are compositionally biased toward basic and acidic residues. The tract at residues 420 to 477 (PLDREQNGETHHTGDWRGPSRDSLPLPMRSRKYQEGPDAIERRPREGSHSPLDSADVR) is disordered. Serine 442, serine 467, serine 469, serine 490, and serine 491 each carry phosphoserine. A compositionally biased stretch (basic and acidic residues) spans 451–467 (KYQEGPDAIERRPREGS). The region spanning 493 to 515 (EECFFDLLSKFQSSRMDDQRCPL) is the GoLoco 1 domain. Residues 510-544 (DQRCPLEEGQAGAAEATAAPTLEERAAQPSVTASP) are disordered. Positions 516-530 (EEGQAGAAEATAAPT) are enriched in low complexity. Phosphoserine is present on residues serine 543 and serine 567. 3 consecutive GoLoco domains span residues 546 to 568 (TEEF…RASV), 594 to 616 (GDEF…RCPP), and 628 to 650 (DEDF…RVDL). Disordered stretches follow at residues 609-628 (IDDQ…TMPD) and 645-673 (EQRV…PGAS). The residue at position 653 (serine 653) is a Phosphoserine.

Belongs to the GPSM family. As to quaternary structure, interacts with INSC/inscuteable and FRMPD1. Interacts with GNAI1, GNAI2 and GNAI3 preferentially in their GDP-bound state. May also interact with GNAO1. Interacts with STK11/LKB1 and MACF1. In terms of processing, phosphorylation regulates interaction with G(i/o) alpha. Isoform 4 is specifically expressed in brain by neurons and also detected in testis, liver, kidney, heart and pancreas (at protein level). Highly expressed in cerebellum and subventricular zone-olfactory bulb system. Isoform 2 and isoform 3 are specifically expressed in heart and are also detected in brain.

Its subcellular location is the endoplasmic reticulum membrane. It is found in the golgi apparatus membrane. The protein resides in the cell membrane. It localises to the cytoplasm. The protein localises to the cytosol. Its function is as follows. Guanine nucleotide dissociation inhibitor (GDI) which functions as a receptor-independent activator of heterotrimeric G-protein signaling. Keeps G(i/o) alpha subunit in its GDP-bound form thus uncoupling heterotrimeric G-proteins signaling from G protein-coupled receptors. Controls spindle orientation and asymmetric cell fate of cerebral cortical progenitors. May also be involved in macroautophagy in intestinal cells. May play a role in drug addiction. This is G-protein-signaling modulator 1 (Gpsm1) from Rattus norvegicus (Rat).